A 349-amino-acid polypeptide reads, in one-letter code: Farnesyl pyrophosphate synthase (349 aa).

3 residues coordinate isopentenyl diphosphate: Lys48, Arg51, and Gln90. Residues Asp97 and Asp101 each coordinate Mg(2+). Dimethylallyl diphosphate is bound at residue Arg106. Arg107 contributes to the isopentenyl diphosphate binding site. Residues Lys194, Thr195, Gln234, Lys251, and Lys260 each contribute to the dimethylallyl diphosphate site.

Belongs to the FPP/GGPP synthase family. Mg(2+) serves as cofactor.

It is found in the cytoplasm. It carries out the reaction isopentenyl diphosphate + dimethylallyl diphosphate = (2E)-geranyl diphosphate + diphosphate. The catalysed reaction is isopentenyl diphosphate + (2E)-geranyl diphosphate = (2E,6E)-farnesyl diphosphate + diphosphate. It participates in isoprenoid biosynthesis; farnesyl diphosphate biosynthesis; farnesyl diphosphate from geranyl diphosphate and isopentenyl diphosphate: step 1/1. Its pathway is isoprenoid biosynthesis; geranyl diphosphate biosynthesis; geranyl diphosphate from dimethylallyl diphosphate and isopentenyl diphosphate: step 1/1. In terms of biological role, catalyzes the sequential condensation of isopentenyl pyrophosphate with the allylic pyrophosphates, dimethylallyl pyrophosphate, and then with the resultant geranylpyrophosphate to the ultimate product farnesyl pyrophosphate. The sequence is that of Farnesyl pyrophosphate synthase (FPS1) from Kluyveromyces lactis (strain ATCC 8585 / CBS 2359 / DSM 70799 / NBRC 1267 / NRRL Y-1140 / WM37) (Yeast).